Reading from the N-terminus, the 462-residue chain is UDP-N-acetylmuramoylalanine--D-glutamate ligase (462 aa).

Residue 109 to 115 participates in ATP binding; that stretch reads GTDGKST.

The protein belongs to the MurCDEF family.

It localises to the cytoplasm. It carries out the reaction UDP-N-acetyl-alpha-D-muramoyl-L-alanine + D-glutamate + ATP = UDP-N-acetyl-alpha-D-muramoyl-L-alanyl-D-glutamate + ADP + phosphate + H(+). Its pathway is cell wall biogenesis; peptidoglycan biosynthesis. Its function is as follows. Cell wall formation. Catalyzes the addition of glutamate to the nucleotide precursor UDP-N-acetylmuramoyl-L-alanine (UMA). In Leptospira borgpetersenii serovar Hardjo-bovis (strain JB197), this protein is UDP-N-acetylmuramoylalanine--D-glutamate ligase.